The chain runs to 122 residues: Large ribosomal subunit protein uL14c (122 aa).

The protein belongs to the universal ribosomal protein uL14 family. Part of the 50S ribosomal subunit.

It is found in the plastid. It localises to the chloroplast. In terms of biological role, binds to 23S rRNA. The polypeptide is Large ribosomal subunit protein uL14c (Guizotia abyssinica (Niger)).